Reading from the N-terminus, the 226-residue chain is Biosynthetic peptidoglycan transglycosylase (226 aa).

Residues 5–25 (IGVTVLAVVGLLLLPYLLTPL) form a helical membrane-spanning segment.

The protein belongs to the glycosyltransferase 51 family.

It is found in the cell inner membrane. It carries out the reaction [GlcNAc-(1-&gt;4)-Mur2Ac(oyl-L-Ala-gamma-D-Glu-L-Lys-D-Ala-D-Ala)](n)-di-trans,octa-cis-undecaprenyl diphosphate + beta-D-GlcNAc-(1-&gt;4)-Mur2Ac(oyl-L-Ala-gamma-D-Glu-L-Lys-D-Ala-D-Ala)-di-trans,octa-cis-undecaprenyl diphosphate = [GlcNAc-(1-&gt;4)-Mur2Ac(oyl-L-Ala-gamma-D-Glu-L-Lys-D-Ala-D-Ala)](n+1)-di-trans,octa-cis-undecaprenyl diphosphate + di-trans,octa-cis-undecaprenyl diphosphate + H(+). Its pathway is cell wall biogenesis; peptidoglycan biosynthesis. Functionally, peptidoglycan polymerase that catalyzes glycan chain elongation from lipid-linked precursors. The protein is Biosynthetic peptidoglycan transglycosylase of Nitrobacter hamburgensis (strain DSM 10229 / NCIMB 13809 / X14).